We begin with the raw amino-acid sequence, 379 residues long: Pectin lyase A (379 aa).

The N-terminal stretch at 1 to 20 (MKTTFLVSLATAALSSTAAA) is a signal peptide. Intrachain disulfides connect C83–C102 and C92–C226. Residue R256 is part of the active site. The cysteines at positions 323 and 331 are disulfide-linked.

It belongs to the polysaccharide lyase 1 family.

It is found in the secreted. It catalyses the reaction Eliminative cleavage of (1-&gt;4)-alpha-D-galacturonan methyl ester to give oligosaccharides with 4-deoxy-6-O-methyl-alpha-D-galact-4-enuronosyl groups at their non-reducing ends.. In terms of biological role, pectinolytic enzymes consist of four classes of enzymes: pectin lyase, polygalacturonase, pectin methylesterase and rhamnogalacturonase. Among pectinolytic enzymes, pectin lyase is the most important in depolymerization of pectin, since it cleaves internal glycosidic bonds of highly methylated pectins. The protein is Pectin lyase A (pelA) of Emericella nidulans (strain FGSC A4 / ATCC 38163 / CBS 112.46 / NRRL 194 / M139) (Aspergillus nidulans).